A 73-amino-acid polypeptide reads, in one-letter code: Putative beta-defensin 108A (73 aa).

The signal sequence occupies residues 1-22 (MRIAVLFFTIFFFMSQVLPAKG). Cystine bridges form between cysteine 28-cysteine 55, cysteine 35-cysteine 49, and cysteine 39-cysteine 56.

It belongs to the beta-defensin family.

The protein localises to the secreted. Functionally, has antibacterial activity. This is Putative beta-defensin 108A from Homo sapiens (Human).